The chain runs to 160 residues: Putative transcriptional regulator protein YobU (160 aa).

The chain is Putative transcriptional regulator protein YobU (yobU) from Bacillus subtilis (strain 168).